The chain runs to 215 residues: Vesicle-trafficking protein SEC22b-B (215 aa).

The Cytoplasmic portion of the chain corresponds to 1-190 (MVLLTMIARL…RSDAKYLNTR (190 aa)). The Longin domain maps to 6-119 (MIARLADGLP…YSFIEFDTYI (114 aa)). Residues 134–194 (NLSNINTELQ…KYLNTRSTYA (61 aa)) form the v-SNARE coiled-coil homology domain. Residues 191-213 (STYAKLAAGGVFFIMLIVYIRFW) traverse the membrane as a helical segment. Residues 214-215 (WL) lie on the Lumenal side of the membrane.

Belongs to the synaptobrevin family. Component of 2 distinct SNARE complexes.

The protein localises to the endoplasmic reticulum membrane. It localises to the endoplasmic reticulum-Golgi intermediate compartment membrane. The protein resides in the golgi apparatus. It is found in the cis-Golgi network membrane. Its subcellular location is the trans-Golgi network membrane. The protein localises to the melanosome. In terms of biological role, SNARE involved in targeting and fusion of ER-derived transport vesicles with the Golgi complex as well as Golgi-derived retrograde transport vesicles with the ER. The chain is Vesicle-trafficking protein SEC22b-B from Danio rerio (Zebrafish).